The primary structure comprises 306 residues: Methionyl-tRNA formyltransferase (306 aa).

110-113 (SLLP) serves as a coordination point for (6S)-5,6,7,8-tetrahydrofolate.

Belongs to the Fmt family.

It carries out the reaction L-methionyl-tRNA(fMet) + (6R)-10-formyltetrahydrofolate = N-formyl-L-methionyl-tRNA(fMet) + (6S)-5,6,7,8-tetrahydrofolate + H(+). In terms of biological role, attaches a formyl group to the free amino group of methionyl-tRNA(fMet). The formyl group appears to play a dual role in the initiator identity of N-formylmethionyl-tRNA by promoting its recognition by IF2 and preventing the misappropriation of this tRNA by the elongation apparatus. In Brucella ovis (strain ATCC 25840 / 63/290 / NCTC 10512), this protein is Methionyl-tRNA formyltransferase.